Consider the following 488-residue polypeptide: MQWEVVIGLETHAQLSTASKIFSGASTAFGAAPNTQAAPVDLALPGVLPVLNKGAVERAITFGLAIGAKIASKSIFARKNYFYPDLPKGYQISQYEIPVVQGGTLTIQVEGRNGQPGYEKTVNLTRAHLEEDAGKSLHEDFAGMTGIDLNRAGTPLLEIVTEPDMRSAAEAVAYARALHALVMWLGICDGNMQEGSFRCDANVSVRRGPDAPFGTRCEIKNLNSFRFLEEAINYEVRRQIELIEDGGTVVQETRLYDPDRKETRSMRSKEDAHDYRYFPDPDLLPLMIGADWVDAVRATLPELPAAMAARFESAYGLPRYDASILTATKATAAYFEAVVAAAGAANAKAAANWIMGEVASNLNRAGLEIDAAPVSPVQLAGLLARIADGTISNNTAKKDVFPAMWAGEHGGDADAIIAEKGLKQMSDSGELEKIIDEVLAANAKSVEEFRAGKDKAFNALVGQAMKATRGKANPSQVNELLKKKLGAA.

Belongs to the GatB/GatE family. GatB subfamily. Heterotrimer of A, B and C subunits.

It catalyses the reaction L-glutamyl-tRNA(Gln) + L-glutamine + ATP + H2O = L-glutaminyl-tRNA(Gln) + L-glutamate + ADP + phosphate + H(+). The catalysed reaction is L-aspartyl-tRNA(Asn) + L-glutamine + ATP + H2O = L-asparaginyl-tRNA(Asn) + L-glutamate + ADP + phosphate + 2 H(+). Functionally, allows the formation of correctly charged Asn-tRNA(Asn) or Gln-tRNA(Gln) through the transamidation of misacylated Asp-tRNA(Asn) or Glu-tRNA(Gln) in organisms which lack either or both of asparaginyl-tRNA or glutaminyl-tRNA synthetases. The reaction takes place in the presence of glutamine and ATP through an activated phospho-Asp-tRNA(Asn) or phospho-Glu-tRNA(Gln). This chain is Aspartyl/glutamyl-tRNA(Asn/Gln) amidotransferase subunit B, found in Ralstonia nicotianae (strain ATCC BAA-1114 / GMI1000) (Ralstonia solanacearum).